The sequence spans 405 residues: Sialic acid transporter NanX (405 aa).

Topologically, residues 1–20 are cytoplasmic; the sequence is MATAWYKQVNPPQRKALFSA. Residues 21–41 form a helical membrane-spanning segment; sequence WLGYVFDGFDFMMIFYILHII. Residues 42-53 are Periplasmic-facing; the sequence is KADLGITDIQAT. The helical transmembrane segment at 54-74 threads the bilayer; that stretch reads LIGTVAFIARPIGGGFFGAMA. Over 75 to 80 the chain is Cytoplasmic; the sequence is DKYGRK. The chain crosses the membrane as a helical span at residues 81–101; it reads PMMMWAIFIYSVGTGLSGIAT. Asn102 is a topological domain (periplasmic). The chain crosses the membrane as a helical span at residues 103 to 123; it reads LYMLAVCRFIVGLGMSGEYAC. At 124–139 the chain is on the cytoplasmic side; that stretch reads ASTYAVESWPKNLQSK. The chain crosses the membrane as a helical span at residues 140–160; that stretch reads ASAFLVSGFSVGNIIAAQIIP. Over 161 to 164 the chain is Periplasmic; the sequence is QFAE. Residues 165 to 185 form a helical membrane-spanning segment; that stretch reads VYGWRNSFFIGLLPVLLVLWI. The Cytoplasmic portion of the chain corresponds to 186–214; it reads RKSAPESQEWIEDKYKDKSTFLSVFRKPH. The helical transmembrane segment at 215-235 threads the bilayer; the sequence is LSISMIVFLVCFCLFGANWPI. Topologically, residues 236 to 250 are periplasmic; sequence NGLLPSYLADNGVNT. The chain crosses the membrane as a helical span at residues 251–271; that stretch reads VVISTLMTIAGLGTLTGTIFF. Over 272–282 the chain is Cytoplasmic; it reads GFVGDKIGVKK. Residues 283–303 traverse the membrane as a helical segment; that stretch reads AFVVGLITSFIFLCPLFFISV. Residues 304–307 lie on the Periplasmic side of the membrane; sequence KNSS. The helical transmembrane segment at 308 to 328 threads the bilayer; the sequence is LIGLCLFGLMFTNLGIAGLVP. The Cytoplasmic segment spans residues 329–344; it reads KFIYDYFPTKLRGLGT. Residues 345 to 365 traverse the membrane as a helical segment; sequence GLIYNLGATGGMAAPVLATYI. Over 366–371 the chain is Periplasmic; the sequence is SGYYGL. The helical transmembrane segment at 372–392 threads the bilayer; that stretch reads GVSLFIVTVAFSALLILLVGF. Residues 393–405 are Cytoplasmic-facing; it reads DIPGKIYKLSVAK.

This sequence belongs to the major facilitator superfamily. Sugar transporter (TC 2.A.1.1) family.

The protein localises to the cell inner membrane. Its function is as follows. Probably transports across the inner membrane the two dehydrated forms of N-acetylneuraminate (Neu5Ac), 2,7-anhydro-N-acetylneuraminate (2,7-AN) and 2-deoxy-2,3-didehydro-N-acetylneuraminate (2,3-EN). The chain is Sialic acid transporter NanX from Escherichia coli (strain K12).